A 191-amino-acid chain; its full sequence is Cell division protein SepF (191 aa).

Residues 150–191 (TSSSPEEASPSSVSPKNTPQYSVENNTAPEPAWGNSKLSAFS) form a disordered region. Over residues 151-164 (SSSPEEASPSSVSP) the composition is skewed to low complexity. Polar residues predominate over residues 165–177 (KNTPQYSVENNTA).

This sequence belongs to the SepF family. As to quaternary structure, homodimer. Interacts with FtsZ.

It is found in the cytoplasm. Functionally, cell division protein that is part of the divisome complex and is recruited early to the Z-ring. Probably stimulates Z-ring formation, perhaps through the cross-linking of FtsZ protofilaments. Its function overlaps with FtsA. The protein is Cell division protein SepF of Prochlorococcus marinus (strain MIT 9312).